The sequence spans 360 residues: Mitogen-activated protein kinase 14 (360 aa).

Ser2 is modified (N-acetylserine). At Ser2 the chain carries Phosphoserine. Position 16 is a phosphothreonine (Thr16). The Protein kinase domain occupies 24 to 308 (YQNLSPVGSG…AAQALAHAYF (285 aa)). ATP contacts are provided by residues 30-38 (VGSGAYGSV) and Lys53. N6-acetyllysine occurs at positions 53 and 152. The active-site Proton acceptor is Asp168. Residue Thr180 is modified to Phosphothreonine; by MAP2K3, MAP2K4, MAP2K6 and autocatalysis. The TXY motif lies at 180–182 (TGY). A Phosphotyrosine; by MAP2K3, MAP2K4, MAP2K6 and autocatalysis modification is found at Tyr182. Phosphothreonine is present on Thr263. Phosphotyrosine; by ZAP70 is present on Tyr323.

Belongs to the protein kinase superfamily. CMGC Ser/Thr protein kinase family. MAP kinase subfamily. As to quaternary structure, component of a signaling complex containing at least AKAP13, PKN1, MAPK14, ZAK and MAP2K3. Within this complex, AKAP13 interacts directly with PKN1, which in turn recruits MAPK14, MAP2K3 and ZAK. Binds to a kinase interaction motif within the protein tyrosine phosphatase, PTPRR. This interaction retains MAPK14 in the cytoplasm and prevents nuclear accumulation. Interacts with SPAG9 and GADD45A. Interacts with CDC25B, CDC25C, DUSP1, DUSP10, DUSP16, NP60, SUPT20H and TAB1. Interacts with casein kinase II subunits CSNK2A1 and CSNK2B. Interacts with PPM1D. Interacts with CDK5RAP3; recruits PPM1D to MAPK14 and may regulate its dephosphorylation. Interacts with DUSP2; this interaction does not lead to catalytic activation of DUSP2 and dephosphrylation of MAPK14. Mg(2+) serves as cofactor. Post-translationally, dually phosphorylated on Thr-180 and Tyr-182 by the MAP2Ks MAP2K3/MKK3, MAP2K4/MKK4 and MAP2K6/MKK6 in response to inflammatory citokines, environmental stress or growth factors, which activates the enzyme. Dual phosphorylation can also be mediated by TAB1-mediated autophosphorylation. TCR engagement in T-cells also leads to Tyr-323 phosphorylation by ZAP70. Dephosphorylated and inactivated by DUPS1, DUSP10 and DUSP16. PPM1D also mediates dephosphorylation and inactivation of MAPK14. Acetylated at Lys-53 and Lys-152 by KAT2B and EP300. Acetylation at Lys-53 increases the affinity for ATP and enhances kinase activity. Lys-53 and Lys-152 are deacetylated by HDAC3. In terms of processing, ubiquitinated. Ubiquitination leads to degradation by the proteasome pathway. As to expression, brain, heart, placenta, pancreas and skeletal muscle. Expressed to a lesser extent in lung, liver and kidney.

Its subcellular location is the cytoplasm. It is found in the nucleus. The enzyme catalyses L-seryl-[protein] + ATP = O-phospho-L-seryl-[protein] + ADP + H(+). It carries out the reaction L-threonyl-[protein] + ATP = O-phospho-L-threonyl-[protein] + ADP + H(+). With respect to regulation, activated by cell stresses such as DNA damage, heat shock, osmotic shock, anisomycin and sodium arsenite, as well as pro-inflammatory stimuli such as bacterial lipopolysaccharide (LPS) and interleukin-1. Activation occurs through dual phosphorylation of Thr-180 and Tyr-182 by either of two dual specificity kinases, MAP2K3/MKK3 or MAP2K6/MKK6, and potentially also MAP2K4/MKK4, as well as by TAB1-mediated autophosphorylation. MAPK14 phosphorylated on both Thr-180 and Tyr-182 is 10-20-fold more active than MAPK14 phosphorylated only on Thr-180, whereas MAPK14 phosphorylated on Tyr-182 alone is inactive. whereas Thr-180 is necessary for catalysis, Tyr-182 may be required for auto-activation and substrate recognition. Phosphorylated at Tyr-323 by ZAP70 in an alternative activation pathway in response to TCR signaling in T-cells. This alternative pathway is inhibited by GADD45A. Inhibited by dual specificity phosphatases, such as DUSP1, DUSP10, and DUSP16. Specifically inhibited by the binding of pyridinyl-imidazole compounds, which are cytokine-suppressive anti-inflammatory drugs (CSAID). Isoform Mxi2 is 100-fold less sensitive to these agents than the other isoforms and is not inhibited by DUSP1. Isoform Exip is not activated by MAP2K6. SB203580 is an inhibitor of MAPK14. Its function is as follows. Serine/threonine kinase which acts as an essential component of the MAP kinase signal transduction pathway. MAPK14 is one of the four p38 MAPKs which play an important role in the cascades of cellular responses evoked by extracellular stimuli such as pro-inflammatory cytokines or physical stress leading to direct activation of transcription factors. Accordingly, p38 MAPKs phosphorylate a broad range of proteins and it has been estimated that they may have approximately 200 to 300 substrates each. Some of the targets are downstream kinases which are activated through phosphorylation and further phosphorylate additional targets. RPS6KA5/MSK1 and RPS6KA4/MSK2 can directly phosphorylate and activate transcription factors such as CREB1, ATF1, the NF-kappa-B isoform RELA/NFKB3, STAT1 and STAT3, but can also phosphorylate histone H3 and the nucleosomal protein HMGN1. RPS6KA5/MSK1 and RPS6KA4/MSK2 play important roles in the rapid induction of immediate-early genes in response to stress or mitogenic stimuli, either by inducing chromatin remodeling or by recruiting the transcription machinery. On the other hand, two other kinase targets, MAPKAPK2/MK2 and MAPKAPK3/MK3, participate in the control of gene expression mostly at the post-transcriptional level, by phosphorylating ZFP36 (tristetraprolin) and ELAVL1, and by regulating EEF2K, which is important for the elongation of mRNA during translation. MKNK1/MNK1 and MKNK2/MNK2, two other kinases activated by p38 MAPKs, regulate protein synthesis by phosphorylating the initiation factor EIF4E2. MAPK14 also interacts with casein kinase II, leading to its activation through autophosphorylation and further phosphorylation of TP53/p53. In the cytoplasm, the p38 MAPK pathway is an important regulator of protein turnover. For example, CFLAR is an inhibitor of TNF-induced apoptosis whose proteasome-mediated degradation is regulated by p38 MAPK phosphorylation. In a similar way, MAPK14 phosphorylates the ubiquitin ligase SIAH2, regulating its activity towards EGLN3. MAPK14 may also inhibit the lysosomal degradation pathway of autophagy by interfering with the intracellular trafficking of the transmembrane protein ATG9. Another function of MAPK14 is to regulate the endocytosis of membrane receptors by different mechanisms that impinge on the small GTPase RAB5A. In addition, clathrin-mediated EGFR internalization induced by inflammatory cytokines and UV irradiation depends on MAPK14-mediated phosphorylation of EGFR itself as well as of RAB5A effectors. Ectodomain shedding of transmembrane proteins is regulated by p38 MAPKs as well. In response to inflammatory stimuli, p38 MAPKs phosphorylate the membrane-associated metalloprotease ADAM17. Such phosphorylation is required for ADAM17-mediated ectodomain shedding of TGF-alpha family ligands, which results in the activation of EGFR signaling and cell proliferation. Another p38 MAPK substrate is FGFR1. FGFR1 can be translocated from the extracellular space into the cytosol and nucleus of target cells, and regulates processes such as rRNA synthesis and cell growth. FGFR1 translocation requires p38 MAPK activation. In the nucleus, many transcription factors are phosphorylated and activated by p38 MAPKs in response to different stimuli. Classical examples include ATF1, ATF2, ATF6, ELK1, PTPRH, DDIT3, TP53/p53 and MEF2C and MEF2A. The p38 MAPKs are emerging as important modulators of gene expression by regulating chromatin modifiers and remodelers. The promoters of several genes involved in the inflammatory response, such as IL6, IL8 and IL12B, display a p38 MAPK-dependent enrichment of histone H3 phosphorylation on 'Ser-10' (H3S10ph) in LPS-stimulated myeloid cells. This phosphorylation enhances the accessibility of the cryptic NF-kappa-B-binding sites marking promoters for increased NF-kappa-B recruitment. Phosphorylates CDC25B and CDC25C which is required for binding to 14-3-3 proteins and leads to initiation of a G2 delay after ultraviolet radiation. Phosphorylates TIAR following DNA damage, releasing TIAR from GADD45A mRNA and preventing mRNA degradation. The p38 MAPKs may also have kinase-independent roles, which are thought to be due to the binding to targets in the absence of phosphorylation. Protein O-Glc-N-acylation catalyzed by the OGT is regulated by MAPK14, and, although OGT does not seem to be phosphorylated by MAPK14, their interaction increases upon MAPK14 activation induced by glucose deprivation. This interaction may regulate OGT activity by recruiting it to specific targets such as neurofilament H, stimulating its O-Glc-N-acylation. Required in mid-fetal development for the growth of embryo-derived blood vessels in the labyrinth layer of the placenta. Also plays an essential role in developmental and stress-induced erythropoiesis, through regulation of EPO gene expression. Isoform MXI2 activation is stimulated by mitogens and oxidative stress and only poorly phosphorylates ELK1 and ATF2. Isoform EXIP may play a role in the early onset of apoptosis. Phosphorylates S100A9 at 'Thr-113'. Phosphorylates NLRP1 downstream of MAP3K20/ZAK in response to UV-B irradiation and ribosome collisions, promoting activation of the NLRP1 inflammasome and pyroptosis. In terms of biological role, (Microbial infection) Activated by phosphorylation by M.tuberculosis EsxA in T-cells leading to inhibition of IFN-gamma production; phosphorylation is apparent within 15 minutes and is inhibited by kinase-specific inhibitors SB203580 and siRNA. The protein is Mitogen-activated protein kinase 14 of Homo sapiens (Human).